Here is a 492-residue protein sequence, read N- to C-terminus: Regulatory protein ViaA (492 aa).

This sequence belongs to the ViaA family. Homodimer. Interacts with RavA.

It localises to the cytoplasm. In terms of biological role, component of the RavA-ViaA chaperone complex, which may act on the membrane to optimize the function of some of the respiratory chains. ViaA stimulates the ATPase activity of RavA. This is Regulatory protein ViaA from Pectobacterium carotovorum subsp. carotovorum (strain PC1).